Reading from the N-terminus, the 270-residue chain is Aliphatic sulfonates import ATP-binding protein SsuB 1 (270 aa).

In terms of domain architecture, ABC transporter spans 18-232 (VQLRNVVRQF…DSGQAGFQLI (215 aa)). 50 to 57 (GASGSGKT) contacts ATP. A disordered region spans residues 247 to 270 (PDTAPQASAPDSTFSELRRVASAR). Residues 251-261 (PQASAPDSTFS) are compositionally biased toward polar residues.

The protein belongs to the ABC transporter superfamily. Aliphatic sulfonates importer (TC 3.A.1.17.2) family. In terms of assembly, the complex is composed of two ATP-binding proteins (SsuB), two transmembrane proteins (SsuC) and a solute-binding protein (SsuA).

Its subcellular location is the cell inner membrane. The catalysed reaction is ATP + H2O + aliphatic sulfonate-[sulfonate-binding protein]Side 1 = ADP + phosphate + aliphatic sulfonateSide 2 + [sulfonate-binding protein]Side 1.. Its function is as follows. Part of the ABC transporter complex SsuABC involved in aliphatic sulfonates import. Responsible for energy coupling to the transport system. This is Aliphatic sulfonates import ATP-binding protein SsuB 1 from Pseudomonas syringae pv. tomato (strain ATCC BAA-871 / DC3000).